The sequence spans 473 residues: Glutamine synthetase (473 aa).

The GS beta-grasp domain maps to 18–102 (NNIKWVDLQF…VLTKVFWGGG (85 aa)). A GS catalytic domain is found at 110 to 473 (PRGIAEEAEK…PMEIYQYLDS (364 aa)). Glu-133 and Glu-135 together coordinate Mg(2+). Glu-207 contributes to the ATP binding site. The Mg(2+) site is built by Glu-212 and Glu-220. L-glutamate is bound by residues 264-265 (NG) and Gly-265. Mg(2+) is bound at residue His-269. Residues 271–273 (HFS) and Ser-273 each bind ATP. L-glutamate is bound by residues Arg-324, Glu-330, and Arg-342. The ATP site is built by Arg-342, Arg-347, and Lys-357. Glu-362 serves as a coordination point for Mg(2+). Arg-364 provides a ligand contact to L-glutamate.

It belongs to the glutamine synthetase family. Oligomer of 12 subunits arranged in the form of two hexagons. Requires Mg(2+) as cofactor. The cofactor is Mn(2+).

Its subcellular location is the cytoplasm. It carries out the reaction L-glutamate + NH4(+) + ATP = L-glutamine + ADP + phosphate + H(+). With respect to regulation, strongly inhibited by glycine and L-alanine. AMP at 10 mM displays a very weak inhibitory effect. The activity of this enzyme is not controlled by adenylation. Functionally, probably involved in nitrogen metabolism via ammonium assimilation. Catalyzes the ATP-dependent biosynthesis of glutamine from glutamate and ammonia. The sequence is that of Glutamine synthetase from Sulfolobus acidocaldarius (strain ATCC 33909 / DSM 639 / JCM 8929 / NBRC 15157 / NCIMB 11770).